Consider the following 81-residue polypeptide: Putative truncated GMC-type inactive oxidoreductase R833 (81 aa).

It belongs to the GMC oxidoreductase family.

The chain is Putative truncated GMC-type inactive oxidoreductase R833 from Acanthamoeba polyphaga mimivirus (APMV).